Here is a 375-residue protein sequence, read N- to C-terminus: Fructose-1,6-bisphosphate aldolase/phosphatase (375 aa).

Residue D15 is the Proton acceptor; for FBP phosphatase activity of the active site. Mg(2+)-binding residues include D15, H22, D56, and D57. Residue H22 coordinates beta-D-fructose 1,6-bisphosphate. H22 serves as a coordination point for dihydroxyacetone phosphate. Residue Y94 participates in beta-D-fructose 1,6-bisphosphate binding. Residue Q98 coordinates Mg(2+). Residue 107–108 (GN) coordinates beta-D-fructose 1,6-bisphosphate. D135 is a Mg(2+) binding site. Residue K136 participates in beta-D-fructose 1,6-bisphosphate binding. K136 is a dihydroxyacetone phosphate binding site. Y237 (proton donor/acceptor; for FBP aldolase activity) is an active-site residue. Mg(2+)-binding residues include K240, D241, and D242. The Schiff-base intermediate with DHAP; for FBP aldolase activity role is filled by K240. Beta-D-fructose 1,6-bisphosphate is bound by residues 250–251 (QS), R274, D295, and Y357. Residues R274 and D295 each contribute to the dihydroxyacetone phosphate site.

The protein belongs to the FBP aldolase/phosphatase family. In terms of assembly, homooctamer; dimer of tetramers. The cofactor is Mg(2+).

It carries out the reaction beta-D-fructose 1,6-bisphosphate + H2O = beta-D-fructose 6-phosphate + phosphate. It catalyses the reaction beta-D-fructose 1,6-bisphosphate = D-glyceraldehyde 3-phosphate + dihydroxyacetone phosphate. It participates in carbohydrate biosynthesis; gluconeogenesis. Activity is enhanced by dithioerythritol, and is slightly inhibited by fructose 2,6-bisphosphate. AMP does not inhibit the enzyme activity. Catalyzes two subsequent steps in gluconeogenesis: the aldol condensation of dihydroxyacetone phosphate (DHAP) and glyceraldehyde-3-phosphate (GA3P) to fructose-1,6-bisphosphate (FBP), and the dephosphorylation of FBP to fructose-6-phosphate (F6P). Does not display hydrolase activity against fructose 2,6-bisphosphate, fructose 6-phosphate, fructose 1-phosphate, glucose 6-phosphate, and glucose 1-phosphate. Exhibits only negligible activity on inositol-1-phosphate (IMP). Is essential for the growth of T.kodakaraensis under gluconeogenic conditions. The protein is Fructose-1,6-bisphosphate aldolase/phosphatase of Thermococcus kodakarensis (strain ATCC BAA-918 / JCM 12380 / KOD1) (Pyrococcus kodakaraensis (strain KOD1)).